We begin with the raw amino-acid sequence, 578 residues long: Triokinase/FMN cyclase (578 aa).

The region spanning 9–336 (SVEGCAGDAL…IDAETNAKAW (328 aa)) is the DhaK domain. Dihydroxyacetone-binding positions include 56–59 (GSGH), Lys109, and Asp114. His221 acts as the Tele-hemiaminal-histidine intermediate in catalysis. One can recognise a DhaL domain in the interval 372–571 (KQMTLVLDRI…AAAIFRAILE (200 aa)). ATP contacts are provided by residues 401 to 404 (DGDC), 446 to 447 (SS), Gly486, and 494 to 495 (TM). A phosphoserine mark is found at Ser511 and Ser545. Residue 556–558 (DPG) participates in ATP binding.

It belongs to the dihydroxyacetone kinase (DAK) family. As to quaternary structure, homodimer. Interacts with IFIH1 (via the CARD domains), the interaction is inhibited by viral infection. It depends on Mg(2+) as a cofactor. Mn(2+) serves as cofactor. Co(2+) is required as a cofactor.

It carries out the reaction dihydroxyacetone + ATP = dihydroxyacetone phosphate + ADP + H(+). The enzyme catalyses D-glyceraldehyde + ATP = D-glyceraldehyde 3-phosphate + ADP + H(+). The catalysed reaction is FAD = riboflavin cyclic-4',5'-phosphate + AMP + H(+). Each activity is inhibited by the substrate(s) of the other. In terms of biological role, catalyzes both the phosphorylation of dihydroxyacetone and of glyceraldehyde, and the splitting of ribonucleoside diphosphate-X compounds among which FAD is the best substrate. Represses IFIH1-mediated cellular antiviral response. The sequence is that of Triokinase/FMN cyclase (Tkfc) from Rattus norvegicus (Rat).